A 234-amino-acid polypeptide reads, in one-letter code: Sugar fermentation stimulation protein A (234 aa).

The segment at residues 201–220 (LLSEAQQRGVEILAYKAEIS) is a DNA-binding region (H-T-H motif).

This sequence belongs to the SfsA family.

Functionally, binds to DNA non-specifically. Could be a regulatory factor involved in maltose metabolism. The protein is Sugar fermentation stimulation protein A of Shigella flexneri serotype 5b (strain 8401).